Consider the following 263-residue polypeptide: Ribosome maturation factor RimP (263 aa).

Positions 192–263 (EREMKRDLGI…RGEIDPIEGE (72 aa)) are disordered. Residues 217–231 (PARRNAPKPKLKSTA) are compositionally biased toward basic residues. Over residues 232-257 (KAHEKKPPKNTKEHRLAAERLRRGEI) the composition is skewed to basic and acidic residues.

The protein belongs to the RimP family.

The protein localises to the cytoplasm. Required for maturation of 30S ribosomal subunits. The protein is Ribosome maturation factor RimP of Nitrobacter hamburgensis (strain DSM 10229 / NCIMB 13809 / X14).